A 175-amino-acid chain; its full sequence is Cytochrome c6, chloroplastic (175 aa).

Heme c-binding residues include Cys-86, Cys-89, and His-90. Heme is bound at residue 98–102 (QPGAT). A heme c-binding site is contributed by Met-130.

The protein belongs to the cytochrome c family. PetJ subfamily. In terms of assembly, monomer. Interacts in vitro with LTO1. Post-translationally, binds 1 heme c group covalently per subunit.

The protein resides in the plastid. Its subcellular location is the chloroplast thylakoid lumen. Its function is as follows. Functions as an electron carrier between membrane-bound cytochrome b6-f and photosystem I in oxygenic photosynthesis. The chain is Cytochrome c6, chloroplastic (PETJ) from Arabidopsis thaliana (Mouse-ear cress).